The primary structure comprises 325 residues: Helicase VP6-A (325 aa).

Disordered regions lie at residues 1 to 127 (MLLA…NGRR) and 174 to 230 (EGVA…EPAR). Basic and acidic residues-rich tracts occupy residues 8 to 18 (VIKRSSEELKQ), 32 to 54 (EGGK…KDGE), 61 to 79 (GQKE…DRRI), and 92 to 105 (PGER…RGDG). Position 106 (K106) interacts with ATP. The span at 106–122 (KVGGGGGDADAGVGATG) shows a compositional bias: gly residues. Basic and acidic residues predominate over residues 175-229 (GVAEQTERSRDLRRKEKNGTHAKAVERGGRKQRKESHGDAQREGVEEEKTSEEPA).

This sequence belongs to the orbivirus VP6 family. Homohexamer.

The protein resides in the virion. The catalysed reaction is ATP + H2O = ADP + phosphate + H(+). In terms of biological role, ATP dependent RNA helicase essential for RNA packaging and viral transcription. Possesses ss- and dsRNA-binding capacity. The sequence is that of Helicase VP6-A (Segment-9) from Bluetongue virus 13 (isolate USA) (BTV 13).